The following is a 386-amino-acid chain: Protein lin-8 (386 aa).

The interval 175-285 (LGLEARRASK…FSQQYGGGGS (111 aa)) is sufficient for interaction with lin-35. The segment at 212-240 (EEPYEETGSNWSDPAPEPSQSKSQSPEAK) is disordered. Residues 229 to 240 (PSQSKSQSPEAK) show a composition bias toward low complexity.

It belongs to the lin-8 family. As to quaternary structure, interacts with lin-35 (via C-terminus). Widely expressed throughout development, with particularly prominent expression in the germline and in neuronal nuclei of the head (at protein level).

Its subcellular location is the nucleus. In terms of biological role, acts as a synthetic multivulva class A (synMuvA) protein and redundantly inhibits lin-3/EGF expression to prevent inappropriate vulva induction. In Caenorhabditis elegans, this protein is Protein lin-8.